Here is a 309-residue protein sequence, read N- to C-terminus: Protoheme IX farnesyltransferase (309 aa).

9 helical membrane passes run 35–55 (IGIV…ALYF), 64–84 (LHIV…SCSI), 114–134 (VLWL…MTTV), 135–155 (TAAI…TMWS), 161–181 (LNTV…WTAV), 187–207 (VVPL…FLAL), 236–256 (IVVW…LGVP), 257–277 (FLTV…YGFK), and 289–309 (FIYS…ATLW).

It belongs to the UbiA prenyltransferase family. Protoheme IX farnesyltransferase subfamily. Interacts with CtaA.

The protein resides in the cell membrane. It carries out the reaction heme b + (2E,6E)-farnesyl diphosphate + H2O = Fe(II)-heme o + diphosphate. It functions in the pathway porphyrin-containing compound metabolism; heme O biosynthesis; heme O from protoheme: step 1/1. Its function is as follows. Converts heme B (protoheme IX) to heme O by substitution of the vinyl group on carbon 2 of heme B porphyrin ring with a hydroxyethyl farnesyl side group. The chain is Protoheme IX farnesyltransferase from Geobacillus sp. (strain WCH70).